Here is a 486-residue protein sequence, read N- to C-terminus: Glycogen synthase (486 aa).

Lys15 contacts ADP-alpha-D-glucose.

The protein belongs to the glycosyltransferase 1 family. Bacterial/plant glycogen synthase subfamily.

The catalysed reaction is [(1-&gt;4)-alpha-D-glucosyl](n) + ADP-alpha-D-glucose = [(1-&gt;4)-alpha-D-glucosyl](n+1) + ADP + H(+). It functions in the pathway glycan biosynthesis; glycogen biosynthesis. Its function is as follows. Synthesizes alpha-1,4-glucan chains using ADP-glucose. The protein is Glycogen synthase of Pseudothermotoga lettingae (strain ATCC BAA-301 / DSM 14385 / NBRC 107922 / TMO) (Thermotoga lettingae).